The following is a 452-amino-acid chain: Phosphatidylinositol N-acetylglucosaminyltransferase GPI3 subunit (452 aa).

Residues 407–427 (LYLLCGIVEYMLFFLLEWLYP) form a helical membrane-spanning segment.

This sequence belongs to the glycosyltransferase group 1 family. As to quaternary structure, component of the phosphatidylinositol N-acetylglucosaminyltransferase complex composed of at least GPI1, GPI2, GPI3, GPI15, GPI19 and ERI1.

Its subcellular location is the endoplasmic reticulum membrane. It carries out the reaction a 1,2-diacyl-sn-glycero-3-phospho-(1D-myo-inositol) + UDP-N-acetyl-alpha-D-glucosamine = a 6-(N-acetyl-alpha-D-glucosaminyl)-1-(1,2-diacyl-sn-glycero-3-phospho)-1D-myo-inositol + UDP + H(+). The protein operates within glycolipid biosynthesis; glycosylphosphatidylinositol-anchor biosynthesis. With respect to regulation, inhibited by Ras, probably via the interaction between RAS2 and ERI1. Its function is as follows. Catalytic subunit in the complex catalyzing the transfer of N-acetylglucosamine from UDP-N-acetylglucosamine to phosphatidylinositol, the first step of GPI biosynthesis. The sequence is that of Phosphatidylinositol N-acetylglucosaminyltransferase GPI3 subunit (SPT14) from Saccharomyces cerevisiae (strain RM11-1a) (Baker's yeast).